We begin with the raw amino-acid sequence, 216 residues long: MVCVLVLAAAAGAVAVFLILRIWVVLRSMDVTPRESLSILVVAGSGGHTTEILRLLGSLSNAYSPRHYVIADTDEMSANKINSFELDRADRDPSNMYTKYYIHRIPRSREVQQSWPSTVFTTLHSMWLSFPLIHRVKPDLVLCNGPGTCVPICVSALLLGILGIKKVIIVYVESICRVETLSMSGKILFHLSDYFIVQWPALKEKYPKSVYLGRIV.

Topologically, residues Met-1–Cys-3 are lumenal. Residues Val-4 to Val-24 form a helical membrane-spanning segment. The Cytoplasmic portion of the chain corresponds to Val-25–Val-216.

This sequence belongs to the ALG14 family. As to quaternary structure, forms with ALG13 the active heterodimeric UDP-N-acetylglucosamine transferase complex.

It localises to the endoplasmic reticulum membrane. Functionally, part of the UDP-N-acetylglucosamine transferase complex that operates in the biosynthetic pathway of dolichol-linked oligosaccharides, the glycan precursors employed in protein asparagine (N)-glycosylation. The assembly of dolichol-linked oligosaccharides begins on the cytosolic side of the endoplasmic reticulum membrane and finishes in its lumen. The sequential addition of sugars to dolichol pyrophosphate produces dolichol-linked oligosaccharides containing fourteen sugars, including two GlcNAcs, nine mannoses and three glucoses. Once assembled, the oligosaccharides are transferred from the lipid to nascent proteins by oligosaccharyltransferases. Functions as a protein-membrane adapter recruiting ALG13 at the cytoplasmic face of the endoplasmic reticulum, where the complex catalyzes the second step of dolichol pyrophosphate biosynthesis, transferring a beta1,4-linked N-acetylglucosamine (GlcNAc) from UDP-GlcNAc to GlcNAc-pyrophosphatedolichol (Gn-PDol) to produce N,N'-diacetylchitobiosyl diphosphodolichol. N,N'-diacetylchitobiosyl diphosphodolichol is a substrate for ALG1, the following enzyme in the biosynthetic pathway. This chain is UDP-N-acetylglucosamine transferase subunit ALG14, found in Homo sapiens (Human).